Reading from the N-terminus, the 401-residue chain is Tumor necrosis factor receptor superfamily member 11B (401 aa).

The signal sequence occupies residues 1 to 21 (MNNLLCCALVFLDISIKWTTQ). 4 TNFR-Cys repeats span residues 24–62 (FPPK…KTVC), 65–105 (CPDH…NRVC), 107–142 (CKEG…NTVC), and 145–185 (CPDG…DNIC). 8 disulfide bridges follow: Cys-41/Cys-54, Cys-44/Cys-62, Cys-65/Cys-80, Cys-83/Cys-97, Cys-87/Cys-105, Cys-107/Cys-118, Cys-124/Cys-142, and Cys-145/Cys-160. Residue Asn-98 is glycosylated (N-linked (GlcNAc...) asparagine). Asn-152, Asn-165, and Asn-178 each carry an N-linked (GlcNAc...) asparagine glycan. Cys-166 and Cys-185 form a disulfide bridge. 2 Death domains span residues 198-269 (DVTL…IVKK) and 270-365 (IIQD…TQSL). An N-linked (GlcNAc...) asparagine glycan is attached at Asn-289.

Homodimer. Interacts with TNFSF10 and TNFSF11. N-glycosylated. Contains sialic acid residues. In terms of processing, the N-terminus is blocked. Highly expressed in adult lung, heart, kidney, liver, spleen, thymus, prostate, ovary, small intestine, thyroid, lymph node, trachea, adrenal gland, testis, and bone marrow. Detected at very low levels in brain, placenta and skeletal muscle. Highly expressed in fetal kidney, liver and lung.

It is found in the secreted. In terms of biological role, acts as a decoy receptor for TNFSF11/RANKL and thereby neutralizes its function in osteoclastogenesis. Inhibits the activation of osteoclasts and promotes osteoclast apoptosis in vitro. Bone homeostasis seems to depend on the local ratio between TNFSF11 and TNFRSF11B. May also play a role in preventing arterial calcification. May act as decoy receptor for TNFSF10/TRAIL and protect against apoptosis. TNFSF10/TRAIL binding blocks the inhibition of osteoclastogenesis. The protein is Tumor necrosis factor receptor superfamily member 11B (TNFRSF11B) of Homo sapiens (Human).